A 325-amino-acid chain; its full sequence is Holliday junction branch migration complex subunit RuvB (325 aa).

Positions 1–181 (MENRLINPVE…FGIVQRLEFY (181 aa)) are large ATPase domain (RuvB-L). ATP-binding positions include Ile-20, Arg-21, Gly-62, Lys-65, Thr-66, Thr-67, 128 to 130 (EDF), Arg-171, Tyr-181, and Arg-218. Residue Thr-66 coordinates Mg(2+). Residues 182-252 (NIEDLTTIVS…IADSALDMLA (71 aa)) form a small ATPAse domain (RuvB-S) region. The interval 255–325 (RRGLDHLDRR…VLTQMAIDQL (71 aa)) is head domain (RuvB-H). DNA contacts are provided by Arg-291, Arg-310, and Arg-315.

It belongs to the RuvB family. Homohexamer. Forms an RuvA(8)-RuvB(12)-Holliday junction (HJ) complex. HJ DNA is sandwiched between 2 RuvA tetramers; dsDNA enters through RuvA and exits via RuvB. An RuvB hexamer assembles on each DNA strand where it exits the tetramer. Each RuvB hexamer is contacted by two RuvA subunits (via domain III) on 2 adjacent RuvB subunits; this complex drives branch migration. In the full resolvosome a probable DNA-RuvA(4)-RuvB(12)-RuvC(2) complex forms which resolves the HJ.

The protein resides in the cytoplasm. It carries out the reaction ATP + H2O = ADP + phosphate + H(+). In terms of biological role, the RuvA-RuvB-RuvC complex processes Holliday junction (HJ) DNA during genetic recombination and DNA repair, while the RuvA-RuvB complex plays an important role in the rescue of blocked DNA replication forks via replication fork reversal (RFR). RuvA specifically binds to HJ cruciform DNA, conferring on it an open structure. The RuvB hexamer acts as an ATP-dependent pump, pulling dsDNA into and through the RuvAB complex. RuvB forms 2 homohexamers on either side of HJ DNA bound by 1 or 2 RuvA tetramers; 4 subunits per hexamer contact DNA at a time. Coordinated motions by a converter formed by DNA-disengaged RuvB subunits stimulates ATP hydrolysis and nucleotide exchange. Immobilization of the converter enables RuvB to convert the ATP-contained energy into a lever motion, pulling 2 nucleotides of DNA out of the RuvA tetramer per ATP hydrolyzed, thus driving DNA branch migration. The RuvB motors rotate together with the DNA substrate, which together with the progressing nucleotide cycle form the mechanistic basis for DNA recombination by continuous HJ branch migration. Branch migration allows RuvC to scan DNA until it finds its consensus sequence, where it cleaves and resolves cruciform DNA. In Psychrobacter sp. (strain PRwf-1), this protein is Holliday junction branch migration complex subunit RuvB.